Reading from the N-terminus, the 308-residue chain is N-acetylmuramic acid 6-phosphate etherase (308 aa).

Residues 63-226 (IVDAFACGGR…STASMIRSGK (164 aa)) form the SIS domain. Catalysis depends on glutamate 91, which acts as the Proton donor. The active site involves glutamate 122.

Belongs to the GCKR-like family. MurNAc-6-P etherase subfamily. As to quaternary structure, homodimer.

The enzyme catalyses N-acetyl-D-muramate 6-phosphate + H2O = N-acetyl-D-glucosamine 6-phosphate + (R)-lactate. The protein operates within amino-sugar metabolism; 1,6-anhydro-N-acetylmuramate degradation. Its pathway is amino-sugar metabolism; N-acetylmuramate degradation. It participates in cell wall biogenesis; peptidoglycan recycling. In terms of biological role, specifically catalyzes the cleavage of the D-lactyl ether substituent of MurNAc 6-phosphate, producing GlcNAc 6-phosphate and D-lactate. Together with AnmK, is also required for the utilization of anhydro-N-acetylmuramic acid (anhMurNAc) either imported from the medium or derived from its own cell wall murein, and thus plays a role in cell wall recycling. The protein is N-acetylmuramic acid 6-phosphate etherase of Colwellia psychrerythraea (strain 34H / ATCC BAA-681) (Vibrio psychroerythus).